The primary structure comprises 479 residues: Phosphatidylinositol 4-kinase type 2-alpha (479 aa).

Met1 carries the post-translational modification N-acetylmethionine. The segment at 1–74 (MDETSPLVSP…ARGAAAQGQT (74 aa)) is disordered. 5 positions are modified to phosphoserine: Ser5, Ser9, Ser44, Ser47, and Ser51. Positions 31 to 45 (VPGGAVRVAAAAGSG) are enriched in low complexity. Residues 53–66 (GHDRERQPLLDRAR) are compositionally biased toward basic and acidic residues. The region spanning 124-453 (CIFPERIYQG…VQMPPVIVET (330 aa)) is the PI3K/PI4K catalytic domain. Residues 130–136 (IYQGSSG) form a G-loop region. ATP is bound by residues 131-137 (YQGSSGS) and Lys152. An important for substrate binding region spans residues 157–159 (EPY). The segment at 165-178 (KWTKWLQKLCCPCC) is important for interaction with membranes. 4 S-palmitoyl cysteine lipidation sites follow: Cys174, Cys175, Cys177, and Cys178. 261 to 264 (QLFV) contributes to the ATP binding site. The interval 268–276 (KDADYWLRR) is important for interaction with membranes. A catalytic loop region spans residues 305-313 (RNTDRGNDN). The activation loop stretch occupies residues 344-364 (AIDNGLAFPLKHPDSWRAYPF). Asp346 is a binding site for ATP. The important for interaction with membranes stretch occupies residues 359 to 368 (WRAYPFYWAW). Ser462 is subject to Phosphoserine.

The protein belongs to the PI3/PI4-kinase family. Type II PI4K subfamily. As to quaternary structure, associates with the BLOC-1 and the AP-3 complexes; the BLOC-1 complex is required for optimal binding of PI4K2A to the AP-3 complex. Interacts with BLOC1S5 and DTNBP1. Interacts with FOS; this interaction may enhance phosphatidylinositol phosphorylation activity. Interacts with ITCH. Interacts with ATG9A. Post-translationally, palmitoylated by ZDHHC3 and ZDHHC7 in the CCPCC motif. Palmitoylation is cholesterol-dependent, and required for TGN localization. In terms of processing, ubiquitinated by ITCH; this does not lead to proteasomal degradation. As to expression, widely expressed. Highest expression is observed in kidney, brain, heart, skeletal muscle, and placenta and lowest expression is observed in colon, thymus, and small intestine.

The protein localises to the golgi apparatus. Its subcellular location is the trans-Golgi network membrane. It is found in the membrane raft. The protein resides in the cell projection. It localises to the dendrite. The protein localises to the presynaptic cell membrane. Its subcellular location is the synapse. It is found in the synaptosome. The protein resides in the mitochondrion. It localises to the endosome. The protein localises to the endosome membrane. Its subcellular location is the cytoplasmic vesicle. It is found in the membrane. The protein resides in the cell membrane. It localises to the perikaryon. The protein localises to the neuron projection. The catalysed reaction is a 1,2-diacyl-sn-glycero-3-phospho-(1D-myo-inositol) + ATP = a 1,2-diacyl-sn-glycero-3-phospho-(1D-myo-inositol 4-phosphate) + ADP + H(+). Functionally, membrane-bound phosphatidylinositol-4 kinase (PI4-kinase) that catalyzes the phosphorylation of phosphatidylinositol (PI) to phosphatidylinositol 4-phosphate (PI4P), a lipid that plays important roles in endocytosis, Golgi function, protein sorting and membrane trafficking and is required for prolonged survival of neurons. Besides, phosphorylation of phosphatidylinositol (PI) to phosphatidylinositol 4-phosphate (PI4P) is the first committed step in the generation of phosphatidylinositol 4,5-bisphosphate (PIP2), a precursor of the second messenger inositol 1,4,5-trisphosphate (InsP3). This Homo sapiens (Human) protein is Phosphatidylinositol 4-kinase type 2-alpha (PI4K2A).